The sequence spans 759 residues: 5-methyltetrahydropteroyltriglutamate--homocysteine methyltransferase (759 aa).

5-methyltetrahydropteroyltri-L-glutamate contacts are provided by residues 17 to 20 and Lys-116; that span reads RELK. L-homocysteine contacts are provided by residues 430–432 and Glu-483; that span reads IGS. L-methionine contacts are provided by residues 430 to 432 and Glu-483; that span reads IGS. 5-methyltetrahydropteroyltri-L-glutamate is bound by residues 514–515 and Trp-560; that span reads RC. Asp-598 lines the L-homocysteine pocket. Asp-598 contributes to the L-methionine binding site. Glu-604 contributes to the 5-methyltetrahydropteroyltri-L-glutamate binding site. Zn(2+)-binding residues include His-641, Cys-643, and Glu-665. Residue His-694 is the Proton donor of the active site. Residue Cys-726 coordinates Zn(2+).

This sequence belongs to the vitamin-B12 independent methionine synthase family. It depends on Zn(2+) as a cofactor.

It catalyses the reaction 5-methyltetrahydropteroyltri-L-glutamate + L-homocysteine = tetrahydropteroyltri-L-glutamate + L-methionine. It functions in the pathway amino-acid biosynthesis; L-methionine biosynthesis via de novo pathway; L-methionine from L-homocysteine (MetE route): step 1/1. In terms of biological role, catalyzes the transfer of a methyl group from 5-methyltetrahydrofolate to homocysteine resulting in methionine formation. This chain is 5-methyltetrahydropteroyltriglutamate--homocysteine methyltransferase, found in Lactococcus lactis subsp. lactis (strain IL1403) (Streptococcus lactis).